The chain runs to 357 residues: Cobalt-precorrin-5B C(1)-methyltransferase (357 aa).

Belongs to the CbiD family.

The catalysed reaction is Co-precorrin-5B + S-adenosyl-L-methionine = Co-precorrin-6A + S-adenosyl-L-homocysteine. It functions in the pathway cofactor biosynthesis; adenosylcobalamin biosynthesis; cob(II)yrinate a,c-diamide from sirohydrochlorin (anaerobic route): step 6/10. Catalyzes the methylation of C-1 in cobalt-precorrin-5B to form cobalt-precorrin-6A. The sequence is that of Cobalt-precorrin-5B C(1)-methyltransferase from Paramagnetospirillum magneticum (strain ATCC 700264 / AMB-1) (Magnetospirillum magneticum).